The following is a 244-amino-acid chain: Phosphoadenosine 5'-phosphosulfate reductase (244 aa).

The active-site Nucleophile; cysteine thiosulfonate intermediate is cysteine 239.

Belongs to the PAPS reductase family. CysH subfamily.

It localises to the cytoplasm. The enzyme catalyses [thioredoxin]-disulfide + sulfite + adenosine 3',5'-bisphosphate + 2 H(+) = [thioredoxin]-dithiol + 3'-phosphoadenylyl sulfate. Its pathway is sulfur metabolism; hydrogen sulfide biosynthesis; sulfite from sulfate: step 3/3. Catalyzes the formation of sulfite from phosphoadenosine 5'-phosphosulfate (PAPS) using thioredoxin as an electron donor. This is Phosphoadenosine 5'-phosphosulfate reductase from Sodalis glossinidius (strain morsitans).